The sequence spans 89 residues: MRPWRCVSMAKAPAAPSSTQPDPVSYEAALEELEQLVGRIESGQLPLDQMLAGYQRGAVLLNFCRARLEAVQDQIKVLDEGALQPWVQE.

Residues 1–23 (MRPWRCVSMAKAPAAPSSTQPDP) form a disordered region.

Belongs to the XseB family. As to quaternary structure, heterooligomer composed of large and small subunits.

It localises to the cytoplasm. The enzyme catalyses Exonucleolytic cleavage in either 5'- to 3'- or 3'- to 5'-direction to yield nucleoside 5'-phosphates.. Its function is as follows. Bidirectionally degrades single-stranded DNA into large acid-insoluble oligonucleotides, which are then degraded further into small acid-soluble oligonucleotides. This is Exodeoxyribonuclease 7 small subunit from Acidovorax sp. (strain JS42).